Reading from the N-terminus, the 355-residue chain is tRNA-specific 2-thiouridylase MnmA (355 aa).

ATP is bound by residues 6–13 (LLSGGVDS) and Leu-33. The active-site Nucleophile is the Cys-100. A disulfide bond links Cys-100 and Cys-195. An ATP-binding site is contributed by Gly-123. The interval 145–147 (KDQ) is interaction with tRNA. Cys-195 functions as the Cysteine persulfide intermediate in the catalytic mechanism.

It belongs to the MnmA/TRMU family.

It localises to the cytoplasm. The catalysed reaction is S-sulfanyl-L-cysteinyl-[protein] + uridine(34) in tRNA + AH2 + ATP = 2-thiouridine(34) in tRNA + L-cysteinyl-[protein] + A + AMP + diphosphate + H(+). Its function is as follows. Catalyzes the 2-thiolation of uridine at the wobble position (U34) of tRNA, leading to the formation of s(2)U34. The chain is tRNA-specific 2-thiouridylase MnmA from Borrelia garinii subsp. bavariensis (strain ATCC BAA-2496 / DSM 23469 / PBi) (Borreliella bavariensis).